The sequence spans 593 residues: Multidrug resistance-like ATP-binding protein MdlB (593 aa).

At 1-25 (MRSFSQLWPTLKRLLAYGSPWRKPL) the chain is on the cytoplasmic side. Positions 25–310 (LGIAVLMMWV…LTTQQAMLQQ (286 aa)) constitute an ABC transmembrane type-1 domain. A helical transmembrane segment spans residues 26–46 (GIAVLMMWVAAAAEVSGPLLI). Topologically, residues 47 to 62 (SYFIDNMVAKNNLPLK) are periplasmic. A helical membrane pass occupies residues 63 to 83 (VVAGLAAAYVGLQLFAAGLHY). Residues 84 to 140 (AQSLLFNRAAVGVVQQLRTDVMDAALRQPLSEFDTQPVGQVISRVTNDTEVIRDLYV) lie on the Cytoplasmic side of the membrane. The chain crosses the membrane as a helical span at residues 141–161 (TVVATVLRSAALVGAMLVAMF). Residues 162–164 (SLD) are Periplasmic-facing. Residues 165-185 (WRMALVAIMIFPVVLVVMVIY) form a helical membrane-spanning segment. Over 186 to 254 (QRYSTPIVRR…LRLDGFLLRP (69 aa)) the chain is Cytoplasmic. Residues 255-275 (LLSLFSSLILCGLLMLFGFSA) form a helical membrane-spanning segment. The Periplasmic segment spans residues 276 to 278 (SGT). The chain crosses the membrane as a helical span at residues 279 to 299 (IEVGVLYAFISYLGRLNEPLI). Residues 300-593 (ELTTQQAMLQ…SVREEESLSA (294 aa)) lie on the Cytoplasmic side of the membrane. Residues 341–574 (IEVDNVSFAY…QGRYWQMYQL (234 aa)) form the ABC transporter domain. 374–381 (GHTGSGKS) contributes to the ATP binding site.

Belongs to the ABC transporter superfamily. Drug exporter-2 (TC 3.A.1.117) family.

The protein localises to the cell inner membrane. The enzyme catalyses ATP + H2O + xenobioticSide 1 = ADP + phosphate + xenobioticSide 2.. The polypeptide is Multidrug resistance-like ATP-binding protein MdlB (mdlB) (Escherichia coli O6:H1 (strain CFT073 / ATCC 700928 / UPEC)).